The sequence spans 432 residues: Cyclic 2,3-diphosphoglycerate synthetase (432 aa).

The protein belongs to the cyclic 2,3-diphosphoglycerate synthetase family.

Its subcellular location is the cytoplasm. The enzyme catalyses (2R)-2,3-bisphosphoglycerate + ATP + H(+) = cyclic (2R)-2,3-bisphosphoglycerate + ADP + phosphate. In terms of biological role, catalyzes the formation of cyclic 2,3-diphosphoglycerate (cDPG) by formation of an intramolecular phosphoanhydride bond at the expense of ATP. This is Cyclic 2,3-diphosphoglycerate synthetase from Thermococcus kodakarensis (strain ATCC BAA-918 / JCM 12380 / KOD1) (Pyrococcus kodakaraensis (strain KOD1)).